A 452-amino-acid polypeptide reads, in one-letter code: Ribosomal protein uS12 methylthiotransferase RimO (452 aa).

In terms of domain architecture, MTTase N-terminal spans 3–118; sequence GKIGFVSLGC…VMQVIHLHLP (116 aa). 6 residues coordinate [4Fe-4S] cluster: Cys12, Cys48, Cys77, Cys149, Cys153, and Cys156. The region spanning 135-382 is the Radical SAM core domain; that stretch reads LTPKHYAYLK…AKAEEISVGR (248 aa). Residues 384–452 form the TRAM domain; the sequence is AKKIGKRLQV…SQGHDLIAET (69 aa).

The protein belongs to the methylthiotransferase family. RimO subfamily. The cofactor is [4Fe-4S] cluster.

The protein localises to the cytoplasm. The enzyme catalyses L-aspartate(89)-[ribosomal protein uS12]-hydrogen + (sulfur carrier)-SH + AH2 + 2 S-adenosyl-L-methionine = 3-methylsulfanyl-L-aspartate(89)-[ribosomal protein uS12]-hydrogen + (sulfur carrier)-H + 5'-deoxyadenosine + L-methionine + A + S-adenosyl-L-homocysteine + 2 H(+). Functionally, catalyzes the methylthiolation of an aspartic acid residue of ribosomal protein uS12. This is Ribosomal protein uS12 methylthiotransferase RimO from Polynucleobacter necessarius subsp. necessarius (strain STIR1).